Reading from the N-terminus, the 155-residue chain is Small ribosomal subunit protein uS7cz/uS7cy (155 aa).

It belongs to the universal ribosomal protein uS7 family. In terms of assembly, part of the 30S ribosomal subunit.

It is found in the plastid. The protein resides in the chloroplast. Functionally, one of the primary rRNA binding proteins, it binds directly to 16S rRNA where it nucleates assembly of the head domain of the 30S subunit. In Citrus sinensis (Sweet orange), this protein is Small ribosomal subunit protein uS7cz/uS7cy (rps7-A).